The sequence spans 94 residues: Pyrimidine/purine nucleoside phosphorylase (94 aa).

It belongs to the nucleoside phosphorylase PpnP family.

It carries out the reaction a purine D-ribonucleoside + phosphate = a purine nucleobase + alpha-D-ribose 1-phosphate. The catalysed reaction is adenosine + phosphate = alpha-D-ribose 1-phosphate + adenine. It catalyses the reaction cytidine + phosphate = cytosine + alpha-D-ribose 1-phosphate. The enzyme catalyses guanosine + phosphate = alpha-D-ribose 1-phosphate + guanine. It carries out the reaction inosine + phosphate = alpha-D-ribose 1-phosphate + hypoxanthine. The catalysed reaction is thymidine + phosphate = 2-deoxy-alpha-D-ribose 1-phosphate + thymine. It catalyses the reaction uridine + phosphate = alpha-D-ribose 1-phosphate + uracil. The enzyme catalyses xanthosine + phosphate = alpha-D-ribose 1-phosphate + xanthine. Its function is as follows. Catalyzes the phosphorolysis of diverse nucleosides, yielding D-ribose 1-phosphate and the respective free bases. Can use uridine, adenosine, guanosine, cytidine, thymidine, inosine and xanthosine as substrates. Also catalyzes the reverse reactions. This is Pyrimidine/purine nucleoside phosphorylase from Salmonella agona (strain SL483).